The chain runs to 510 residues: Replication factor C large subunit (510 aa).

Residue 48–55 coordinates ATP; the sequence is GPPGTGKT. Residues 459–510 form a disordered region; sequence MESMLERKREESEVEEEAKEIEEAVEKAEEEEEREEKKKEGGGEQRTLDAFF. Residues 493-510 are compositionally biased toward basic and acidic residues; sequence EEKKKEGGGEQRTLDAFF.

Belongs to the activator 1 small subunits family. RfcL subfamily. As to quaternary structure, heteromultimer composed of small subunits (RfcS) and large subunits (RfcL).

Part of the RFC clamp loader complex which loads the PCNA sliding clamp onto DNA. This chain is Replication factor C large subunit, found in Methanopyrus kandleri (strain AV19 / DSM 6324 / JCM 9639 / NBRC 100938).